The following is a 316-amino-acid chain: L-lactate dehydrogenase (316 aa).

Residues Val-15, Asp-37, Lys-42, Tyr-68, and 82 to 83 (GL) contribute to the NAD(+) site. Substrate is bound by residues Gln-85, Arg-91, and 123-126 (NPVD). NAD(+)-binding positions include 121 to 123 (ASN) and Thr-146. Position 151 to 154 (151 to 154 (DTSR)) interacts with substrate. Beta-D-fructose 1,6-bisphosphate is bound by residues Arg-156 and His-171. Catalysis depends on His-178, which acts as the Proton acceptor. Phosphotyrosine is present on Tyr-222. Thr-231 is a binding site for substrate.

Belongs to the LDH/MDH superfamily. LDH family. Homotetramer.

The protein localises to the cytoplasm. It carries out the reaction (S)-lactate + NAD(+) = pyruvate + NADH + H(+). It participates in fermentation; pyruvate fermentation to lactate; (S)-lactate from pyruvate: step 1/1. Allosterically activated by fructose 1,6-bisphosphate (FBP). In terms of biological role, catalyzes the conversion of lactate to pyruvate. The polypeptide is L-lactate dehydrogenase (Borrelia hermsii (strain HS1 / DAH)).